The sequence spans 153 residues: Superoxide dismutase [Cu-Zn] (153 aa).

3 residues coordinate Cu cation: His46, His48, and His63. An intrachain disulfide couples Cys57 to Cys146. Zn(2+) contacts are provided by His63, His71, His80, and Asp83. His120 is a binding site for Cu cation.

The protein belongs to the Cu-Zn superoxide dismutase family. In terms of assembly, homodimer. Cu cation serves as cofactor. The cofactor is Zn(2+).

The protein localises to the cytoplasm. The enzyme catalyses 2 superoxide + 2 H(+) = H2O2 + O2. Destroys radicals which are normally produced within the cells and which are toxic to biological systems. The polypeptide is Superoxide dismutase [Cu-Zn] (SODCC) (Solidago canadensis var. scabra (Tall goldenrod)).